The sequence spans 259 residues: 7-cyano-7-deazaguanine synthase (259 aa).

32 to 42 (LSGGLDSVTCL) is a binding site for ATP. The Zn(2+) site is built by Cys223, Cys233, Cys236, and Cys239.

The protein belongs to the QueC family. Zn(2+) serves as cofactor.

It carries out the reaction 7-carboxy-7-deazaguanine + NH4(+) + ATP = 7-cyano-7-deazaguanine + ADP + phosphate + H2O + H(+). It participates in purine metabolism; 7-cyano-7-deazaguanine biosynthesis. Catalyzes the ATP-dependent conversion of 7-carboxy-7-deazaguanine (CDG) to 7-cyano-7-deazaguanine (preQ(0)). This Psychrobacter arcticus (strain DSM 17307 / VKM B-2377 / 273-4) protein is 7-cyano-7-deazaguanine synthase.